Consider the following 494-residue polypeptide: V-type proton ATPase subunit B (494 aa).

Arg-384 serves as a coordination point for ATP.

Belongs to the ATPase alpha/beta chains family. As to quaternary structure, V-ATPase is a heteromultimeric enzyme made up of two complexes: the ATP-hydrolytic V1 complex and the proton translocation V0 complex. The V1 complex consists of three catalytic AB heterodimers that form a heterohexamer, three peripheral stalks each consisting of EG heterodimers, one central rotor including subunits D and F, and the regulatory subunits C and H. The proton translocation complex V0 consists of the proton transport subunit a, a ring of proteolipid subunits c9c'', rotary subunit d, subunits e and f, and the accessory subunits VhaAC45 and ATP6AP2.

Functionally, non-catalytic subunit of the V1 complex of vacuolar(H+)-ATPase (V-ATPase), a multisubunit enzyme composed of a peripheral complex (V1) that hydrolyzes ATP and a membrane integral complex (V0) that translocates protons. V-ATPase is responsible for acidifying and maintaining the pH of intracellular compartments and in some cell types, is targeted to the plasma membrane, where it is responsible for acidifying the extracellular environment. Essential for the proper assembly and activity of V-ATPase. In Heliothis virescens (Tobacco budworm moth), this protein is V-type proton ATPase subunit B (VHA55).